The sequence spans 150 residues: Catabolic 3-dehydroquinase 2 (150 aa).

The Proton acceptor role is filled by Y23. Substrate-binding residues include N74, H80, and D87. The active-site Proton donor is the H100. Substrate is bound by residues 101–102 (IT) and R111.

It belongs to the type-II 3-dehydroquinase family. As to quaternary structure, homododecamer. Adopts a ring-like structure, composed of an arrangement of two hexameric rings stacked on top of one another.

The enzyme catalyses 3-dehydroquinate = 3-dehydroshikimate + H2O. It functions in the pathway aromatic compound metabolism; 3,4-dihydroxybenzoate biosynthesis; 3,4-dihydroxybenzoate from 3-dehydroquinate: step 1/2. Is involved in the catabolism of quinate. Allows the utilization of quinate as carbon source via the beta-ketoadipate pathway. This is Catabolic 3-dehydroquinase 2 from Aspergillus fumigatus (strain ATCC MYA-4609 / CBS 101355 / FGSC A1100 / Af293) (Neosartorya fumigata).